A 423-amino-acid polypeptide reads, in one-letter code: Zinc transporter ZIP13 (423 aa).

Residues 1 to 15 (MPGCPCPGIGMAGQR) are Lumenal-facing. The chain crosses the membrane as a helical span at residues 16–36 (LLFLAALALELLGGAGGSQQA). Over 37 to 68 (LRSRGVAAACRLDSKESESWGALLSGERLETW) the chain is Cytoplasmic. The helical transmembrane segment at 69-89 (ICSLLGSLMVGLSGVFPLLVI) threads the bilayer. The Lumenal segment spans residues 90–108 (PLEMGTTLRSEAGARRLKQ). Residues 109–129 (LLSFALGGLLGNVFLHLLPEA) traverse the membrane as a helical segment. The Cytoplasmic segment spans residues 130–149 (WAYTNSASSGGERQSLQQQQ). The helical transmembrane segment at 150–170 (QLGLWVIAGFLTFLVLEKLFF) threads the bilayer. Residues 171–235 (DSKGKEETSQ…TIDNFTHGLA (65 aa)) lie on the Lumenal side of the membrane. A helical membrane pass occupies residues 236–256 (VAASFLVSKKIGLLTTMAILL). The XEXPHE-motif signature appears at 257-262 (HEIPHE). Topologically, residues 257 to 278 (HEIPHEVGDFAILLRAGFDRWS) are cytoplasmic. A helical transmembrane segment spans residues 279–299 (AAKLQLSTALGGLLGACFAIC). At 300-368 (AQSPKGVGTG…RAPPPATEET (69 aa)) the chain is on the lumenal side. Residues 369-389 (VAWILPFTSGGFLYIALVNVL) traverse the membrane as a helical segment. Residues 390–401 (PDLLEEDDPWRS) are Cytoplasmic-facing. A helical membrane pass occupies residues 402–422 (LQQVLLLCAGIVVMVLFSVFV). Glutamate 423 is a topological domain (lumenal).

This sequence belongs to the ZIP transporter (TC 2.A.5) family. In terms of assembly, homodimer.

It localises to the golgi apparatus membrane. It is found in the cytoplasmic vesicle membrane. Its subcellular location is the endoplasmic reticulum membrane. It catalyses the reaction Zn(2+)(in) = Zn(2+)(out). In terms of biological role, functions as a zinc transporter transporting Zn(2+) from the Golgi apparatus to the cytosol and thus influences the zinc level at least in areas of the cytosol. May regulate beige adipocyte differentiation. The chain is Zinc transporter ZIP13 from Bos taurus (Bovine).